Here is a 291-residue protein sequence, read N- to C-terminus: 4-hydroxy-tetrahydrodipicolinate synthase (291 aa).

Thr45 contacts pyruvate. The active-site Proton donor/acceptor is the Tyr133. The Schiff-base intermediate with substrate role is filled by Lys161. Ile203 contacts pyruvate.

This sequence belongs to the DapA family. As to quaternary structure, homotetramer; dimer of dimers.

The protein localises to the cytoplasm. It catalyses the reaction L-aspartate 4-semialdehyde + pyruvate = (2S,4S)-4-hydroxy-2,3,4,5-tetrahydrodipicolinate + H2O + H(+). It participates in amino-acid biosynthesis; L-lysine biosynthesis via DAP pathway; (S)-tetrahydrodipicolinate from L-aspartate: step 3/4. Its function is as follows. Catalyzes the condensation of (S)-aspartate-beta-semialdehyde [(S)-ASA] and pyruvate to 4-hydroxy-tetrahydrodipicolinate (HTPA). The chain is 4-hydroxy-tetrahydrodipicolinate synthase from Saccharophagus degradans (strain 2-40 / ATCC 43961 / DSM 17024).